Reading from the N-terminus, the 294-residue chain is Beta-glucoside kinase (294 aa).

5–11 (AFDIGGT) provides a ligand contact to ATP.

This sequence belongs to the ROK (NagC/XylR) family.

It catalyses the reaction D-cellobiose + ATP = 6-phospho-beta-D-glucosyl-(1-&gt;4)-D-glucose + ADP + H(+). Catalyzes the ATP-dependent phosphorylation of cellobiose to produce cellobiose-6'-P. May have a dual role of kinase and transcriptional regulator of the cellobiose-PTS operon. This Listeria monocytogenes serovar 1/2a (strain ATCC BAA-679 / EGD-e) protein is Beta-glucoside kinase (bglK).